The sequence spans 218 residues: MGMWSIGAGAIGVAALALLLANTDMFLAKPEKAALEYLEDIDLKTLEKDAVTFKAKALWEKNGAVIMAVRRPGCFLCREEATDLSSLKPKLDELGVPLYAVVKEHIKNEVKDFQPYFKGEIFLDENKKFYGPQRRKMMFMGFVRLGVWQNFFRAWNGGFSGNLDGEGFILGGVFVMGPGKQGILLEHREKEFGDKVNLTSVLEAARKIRPQTSASEKQ.

A thioredoxin fold region spans residues 3-101; it reads MWSIGAGAIG…DELGVPLYAV (99 aa). Active-site redox-active residues include cysteine 74 and cysteine 77.

The protein belongs to the peroxiredoxin-like PRXL2 family. PRXL2A subfamily.

The protein resides in the cytoplasm. The protein localises to the secreted. Its function is as follows. Involved in redox regulation of the cell. Acts as an antioxidant. Inhibits TNFSF11-induced NFKB1 and JUN activation and osteoclast differentiation. May affect bone resorption and help to maintain bone mass. Acts as a negative regulator of macrophage-mediated inflammation by inhibiting macrophage production of inflammatory cytokines, probably through suppression of the MAPK signaling pathway. The sequence is that of Peroxiredoxin-like 2A (PRXL2A) from Bos taurus (Bovine).